We begin with the raw amino-acid sequence, 511 residues long: Cytochrome P450 714C3 (511 aa).

Residues 1–6 (MEKLLA) lie on the Lumenal side of the membrane. A helical; Signal-anchor for type III membrane protein membrane pass occupies residues 7–27 (LIVVLVILLSLALFYLCNILW). At 28 to 511 (LRAVKIRKKL…GLPLMVTKLP (484 aa)) the chain is on the cytoplasmic side. C458 is a heme binding site.

Belongs to the cytochrome P450 family. Heme serves as cofactor.

The protein localises to the membrane. In Oryza sativa subsp. japonica (Rice), this protein is Cytochrome P450 714C3 (CYP714C3).